An 897-amino-acid chain; its full sequence is Interference hedgehog (897 aa).

An N-terminal signal peptide occupies residues 1 to 26; that stretch reads MSVTRGHKSTPSLLLLFLSVLTSLLA. At 27–702 the chain is on the extracellular side; it reads AIPVLQANAP…THNETFNMNP (676 aa). 4 Ig-like C2-type domains span residues 40–147, 148–235, 244–336, and 342–429; these read PGVR…ATIS, GDKI…RRLE, PSAA…YIQL, and PRIV…LQVN. Disulfide bonds link Cys-63–Cys-125, Cys-169–Cys-217, and Cys-272–Cys-320. N-linked (GlcNAc...) asparagine glycans are attached at residues Asn-96 and Asn-99. 4 N-linked (GlcNAc...) asparagine glycosylation sites follow: Asn-296, Asn-351, Asn-393, and Asn-467. Cys-363 and Cys-411 form a disulfide bridge. Residues 434–468 are disordered; it reads QAGDGMGTGGMGRSSNRNAHNRKQKQMVPPSAPNV. Fibronectin type-III domains are found at residues 462–571 and 579–674; these read PPSA…LQRG and VPEL…TQRP. Heparin is bound by residues Arg-498, Lys-504, and Lys-506. Asn-530 is a glycosylation site (N-linked (GlcNAc...) asparagine). Arg-545 provides a ligand contact to heparin. Asn-561 is a glycosylation site (N-linked (GlcNAc...) asparagine). Over residues 666–682 the composition is skewed to polar residues; it reads LKQGRTQRPRSSTTAQP. Residues 666–694 are disordered; the sequence is LKQGRTQRPRSSTTAQPTMHTVDTTTPTH. The segment covering 683-694 has biased composition (low complexity); the sequence is TMHTVDTTTPTH. A glycan (N-linked (GlcNAc...) asparagine) is linked at Asn-695. The helical transmembrane segment at 703-723 threads the bilayer; the sequence is LLTGTISGGALLILLVISACL. The Cytoplasmic segment spans residues 724–897; that stretch reads CLCKRRHSRG…SSGSLNSVGV (174 aa). Disordered regions lie at residues 773 to 793 and 819 to 849; these read AQQQQQQLQQQHQQDEKDSQD and MSSSSLRRSQRTLERAAAGGGSGGNNNNLNQ. The span at 774–784 shows a compositional bias: low complexity; it reads QQQQQQLQQQH.

Belongs to the immunoglobulin superfamily. IHOG family. In terms of assembly, homodimer. Heterotetramer; 2 iHog chains bind 2 hh chains when facilitated by heparin, heparin is required to promote high-affinity interactions between hh and iHog.

It localises to the membrane. Mediates response to the active Hedgehog (Hh) protein signal in embryos, functioning upstream or at the level of patched (ptc). The sequence is that of Interference hedgehog from Drosophila mojavensis (Fruit fly).